We begin with the raw amino-acid sequence, 159 residues long: MEFQTADLCDANESRVKIVSPMFRSYGGRGAFCGRITTLKVFEDNSLVRTALEGPGQGKVLVVDGGGSMRCALVGDQLALLGVKNQWAGVIVYGCIRDSKAIGTMELGVFALGSHPLKSIKKGAGDVDIAVTFGGVTFTPGHFIYADEDGVVVSESSLL.

Substrate-binding positions include 75–78 (GDQL) and arginine 97. An a divalent metal cation-binding site is contributed by aspartate 98.

This sequence belongs to the class II aldolase/RraA-like family. In terms of assembly, homotrimer. Requires a divalent metal cation as cofactor.

The catalysed reaction is 4-hydroxy-4-methyl-2-oxoglutarate = 2 pyruvate. The enzyme catalyses oxaloacetate + H(+) = pyruvate + CO2. Catalyzes the aldol cleavage of 4-hydroxy-4-methyl-2-oxoglutarate (HMG) into 2 molecules of pyruvate. Also contains a secondary oxaloacetate (OAA) decarboxylase activity due to the common pyruvate enolate transition state formed following C-C bond cleavage in the retro-aldol and decarboxylation reactions. The chain is Putative 4-hydroxy-4-methyl-2-oxoglutarate aldolase from Aromatoleum aromaticum (strain DSM 19018 / LMG 30748 / EbN1) (Azoarcus sp. (strain EbN1)).